A 498-amino-acid chain; its full sequence is Ribosomal RNA small subunit methyltransferase G 2 (498 aa).

Positions 1-230 are methyltransferase G; the sequence is MRNGTIRYPG…FQRLGPPTRI (230 aa). Residues G89, M94, and R154 each contribute to the S-adenosyl-L-methionine site. The interval 231–498 is methyltransferase TrmH family; it reads RKETAMKRHG…SQTKHSPAPA (268 aa).

It in the N-terminal section; belongs to the methyltransferase superfamily. RNA methyltransferase RsmG family. This sequence in the C-terminal section; belongs to the class IV-like SAM-binding methyltransferase superfamily. RNA methyltransferase TrmH family.

Its subcellular location is the cytoplasm. It carries out the reaction guanosine(527) in 16S rRNA + S-adenosyl-L-methionine = N(7)-methylguanosine(527) in 16S rRNA + S-adenosyl-L-homocysteine. Functionally, specifically methylates the N7 position of guanine in position 527 of 16S rRNA. The protein is Ribosomal RNA small subunit methyltransferase G 2 (rsmG2) of Syntrophobacter fumaroxidans (strain DSM 10017 / MPOB).